A 216-amino-acid polypeptide reads, in one-letter code: Ras-like protein rasW (216 aa).

16–23 lines the GTP pocket; sequence GDGGVGKT. The Effector region signature appears at 38 to 46; sequence YDPTIEDSY. Residues 63 to 67 and 122 to 125 contribute to the GTP site; these read DTAGQ and NKID. The segment at 171–193 is disordered; the sequence is KRKEDPQSHKPSKDSDSKKPLVN. A compositionally biased stretch (basic and acidic residues) spans 172 to 189; it reads RKEDPQSHKPSKDSDSKK. Cysteine 213 carries the cysteine methyl ester modification. Residue cysteine 213 is the site of S-geranylgeranyl cysteine attachment. Positions 214 to 216 are cleaved as a propeptide — removed in mature form; sequence KMM.

This sequence belongs to the small GTPase superfamily. Ras family.

It is found in the cell membrane. The enzyme catalyses GTP + H2O = GDP + phosphate + H(+). In terms of biological role, ras proteins bind GDP/GTP and possess intrinsic GTPase activity. The sequence is that of Ras-like protein rasW (rasW) from Dictyostelium discoideum (Social amoeba).